A 478-amino-acid polypeptide reads, in one-letter code: Protein nucleotidyltransferase YdiU (478 aa).

ATP contacts are provided by glycine 74, glycine 76, arginine 77, lysine 97, aspartate 109, glycine 110, arginine 160, and arginine 167. Catalysis depends on aspartate 236, which acts as the Proton acceptor. Mg(2+) is bound by residues asparagine 237 and aspartate 246. Aspartate 246 provides a ligand contact to ATP.

This sequence belongs to the SELO family. Requires Mg(2+) as cofactor. Mn(2+) serves as cofactor.

It carries out the reaction L-seryl-[protein] + ATP = 3-O-(5'-adenylyl)-L-seryl-[protein] + diphosphate. The enzyme catalyses L-threonyl-[protein] + ATP = 3-O-(5'-adenylyl)-L-threonyl-[protein] + diphosphate. The catalysed reaction is L-tyrosyl-[protein] + ATP = O-(5'-adenylyl)-L-tyrosyl-[protein] + diphosphate. It catalyses the reaction L-histidyl-[protein] + UTP = N(tele)-(5'-uridylyl)-L-histidyl-[protein] + diphosphate. It carries out the reaction L-seryl-[protein] + UTP = O-(5'-uridylyl)-L-seryl-[protein] + diphosphate. The enzyme catalyses L-tyrosyl-[protein] + UTP = O-(5'-uridylyl)-L-tyrosyl-[protein] + diphosphate. In terms of biological role, nucleotidyltransferase involved in the post-translational modification of proteins. It can catalyze the addition of adenosine monophosphate (AMP) or uridine monophosphate (UMP) to a protein, resulting in modifications known as AMPylation and UMPylation. In Chromobacterium violaceum (strain ATCC 12472 / DSM 30191 / JCM 1249 / CCUG 213 / NBRC 12614 / NCIMB 9131 / NCTC 9757 / MK), this protein is Protein nucleotidyltransferase YdiU.